Consider the following 125-residue polypeptide: Apoptosis inhibitor Rv3655c (125 aa).

A signal peptide spans 1 to 33 (MEAALAIATLVLVLVLCLAGVTAVSMQVRCIDA).

As to quaternary structure, interacts with human E3 ubiquitin-protein ligase RNF213.

It is found in the secreted. It localises to the host cytoplasm. Effector protein that participates in the suppression of macrophage apoptosis by blocking the extrinsic pathway. Interferes with caspase-8 activation and binds to the host E3 ubiquitin-protein ligase RNF213, whose fusion partners have anti-apoptotic function. This is Apoptosis inhibitor Rv3655c from Mycobacterium tuberculosis (strain ATCC 25618 / H37Rv).